Consider the following 441-residue polypeptide: Ribosomal protein uS12 methylthiotransferase RimO (441 aa).

The 111-residue stretch at 8–118 folds into the MTTase N-terminal domain; it reads PKIGFVSLGC…VLQHVHHYVP (111 aa). The [4Fe-4S] cluster site is built by C17, C53, C82, C150, C154, and C157. A Radical SAM core domain is found at 136–373; the sequence is LTPRHYAYLK…MALQQQISAE (238 aa). The TRAM domain occupies 376-441; sequence QEKVGREILV…DEYDLWGSLV (66 aa).

Belongs to the methylthiotransferase family. RimO subfamily. The cofactor is [4Fe-4S] cluster.

Its subcellular location is the cytoplasm. The catalysed reaction is L-aspartate(89)-[ribosomal protein uS12]-hydrogen + (sulfur carrier)-SH + AH2 + 2 S-adenosyl-L-methionine = 3-methylsulfanyl-L-aspartate(89)-[ribosomal protein uS12]-hydrogen + (sulfur carrier)-H + 5'-deoxyadenosine + L-methionine + A + S-adenosyl-L-homocysteine + 2 H(+). Functionally, catalyzes the methylthiolation of an aspartic acid residue of ribosomal protein uS12. In Cronobacter sakazakii (strain ATCC BAA-894) (Enterobacter sakazakii), this protein is Ribosomal protein uS12 methylthiotransferase RimO.